The sequence spans 169 residues: Flagellar biosynthetic protein FliU (169 aa).

It belongs to the FliB family.

In terms of biological role, required for the secretion of flagellin and expression of motility. In Salmonella muenchen, this protein is Flagellar biosynthetic protein FliU (fliU).